Consider the following 556-residue polypeptide: Polypeptide N-acetylgalactosaminyltransferase 13 (556 aa).

Residues 1–4 (MRRF) lie on the Cytoplasmic side of the membrane. The chain crosses the membrane as a helical; Signal-anchor for type II membrane protein span at residues 5–27 (VYCKVVLATSLMWVLVDVFLLLY). Over 28–556 (FSECNKCDDK…WLLRNMTLGT (529 aa)) the chain is Lumenal. Residues Asn-94 and Asn-116 are each glycosylated (N-linked (GlcNAc...) asparagine). Cystine bridges form between Cys-105-Cys-338, Cys-329-Cys-407, Cys-441-Cys-458, Cys-481-Cys-496, and Cys-522-Cys-539. The catalytic subdomain A stretch occupies residues 114–224 (LPNTSVVIVF…LGWLEPLLAR (111 aa)). Residues Asp-155 and Arg-185 each coordinate substrate. Mn(2+)-binding residues include Asp-208 and His-210. The segment at 284-346 (PVRTPTMAGG…TCSHVGHVFR (63 aa)) is catalytic subdomain B. Position 315 (Trp-315) interacts with substrate. His-343 lines the Mn(2+) pocket. Residues Arg-346 and Tyr-351 each coordinate substrate. The Ricin B-type lectin domain occupies 428–550 (YSLGEIRNVE…GSRSQQWLLR (123 aa)). N-linked (GlcNAc...) asparagine glycosylation occurs at Asn-551.

The protein belongs to the glycosyltransferase 2 family. GalNAc-T subfamily. The cofactor is Mn(2+). Specifically expressed in neuronal cells. Not expressed in glial cells such as astrocytes. Expressed at low level.

The protein localises to the golgi apparatus membrane. It carries out the reaction L-seryl-[protein] + UDP-N-acetyl-alpha-D-galactosamine = a 3-O-[N-acetyl-alpha-D-galactosaminyl]-L-seryl-[protein] + UDP + H(+). It catalyses the reaction L-threonyl-[protein] + UDP-N-acetyl-alpha-D-galactosamine = a 3-O-[N-acetyl-alpha-D-galactosaminyl]-L-threonyl-[protein] + UDP + H(+). It participates in protein modification; protein glycosylation. In terms of biological role, catalyzes the initial reaction in O-linked oligosaccharide biosynthesis, the transfer of an N-acetyl-D-galactosamine (GalNAc) residue from UDP-GalNAc to a serine or threonine residue on the protein receptor. Generates GalNAc-O-Ser/Thr structure also known as Tn antigen, which itself is immunogenic but also serves as a precursor for the synthesis of different mucin-type O-glycan core structures. Contributes to the synthesis of O-linked glycans on mucins and proteoglycans of the central nervous system. Can glycosylate both unmodified peptides and glycopeptides that already contain an O-linked GalNAc sugar. Transfers GalNAc to Thr-/Ser-rich tandem repeats GTTPSPVPTTSTTSAP of MUC5AC. Transfers GalNAc to three consecutive serine/threonine residues on SDC3 forming a triplet-Tn epitope expressed in Purkinje cells of the developing brain. May promote neurogenesis through glycosylation and stabilization of PDPN. This Mus musculus (Mouse) protein is Polypeptide N-acetylgalactosaminyltransferase 13 (Galnt13).